An 890-amino-acid polypeptide reads, in one-letter code: DNA mismatch repair protein MutS (890 aa).

An ATP-binding site is contributed by 645-652; that stretch reads GPNMAGKS.

Belongs to the DNA mismatch repair MutS family.

Functionally, this protein is involved in the repair of mismatches in DNA. It is possible that it carries out the mismatch recognition step. This protein has a weak ATPase activity. The polypeptide is DNA mismatch repair protein MutS (Rickettsia rickettsii (strain Iowa)).